The following is a 222-amino-acid chain: MSSSESIRMVLIGPPGAGKGTQAPNLQERFHAAHLATGDMLRSQIAKGTQLGLEAKKIMDQGGLVSDDIMVNMIKDELTNNPACKNGFILDGFPRTIPQAEKLDQMLKEQGTPLEKAIELKVDDELLVARITGRLIHPASGRSYHKIFNPPKEDMKDDVTGEALVQRSDDNADALKKRLAAYHAQTEPIVDFYKKTGIWAGVDASQPPATVWADILNKLGKN.

Position 2 (Ser-2) is a propeptide, removed in mature form. An N-acetylserine mark is found at Ser-2 and Ser-3. 16–21 provides a ligand contact to ATP; sequence GAGKGT. Positions 36-65 are NMP; sequence ATGDMLRSQIAKGTQLGLEAKKIMDQGGLV. AMP contacts are provided by residues Thr-37, Arg-42, 63–65, 92–95, and Gln-99; these read GLV and GFPR. Positions 133–170 are LID; the sequence is GRLIHPASGRSYHKIFNPPKEDMKDDVTGEALVQRSDD. ATP contacts are provided by residues Arg-134 and 143 to 144; that span reads SY. AMP contacts are provided by Arg-167 and Arg-178. ATP is bound at residue Gln-206.

It belongs to the adenylate kinase family. AK2 subfamily. In terms of assembly, monomer.

It localises to the cytoplasm. Its subcellular location is the cytosol. It is found in the mitochondrion intermembrane space. It carries out the reaction AMP + ATP = 2 ADP. In terms of biological role, catalyzes the reversible transfer of the terminal phosphate group between ATP and AMP. Plays an important role in cellular energy homeostasis and in adenine nucleotide metabolism. Adenylate kinase activity is critical for regulation of the phosphate utilization and the AMP de novo biosynthesis pathways. In Saccharomyces cerevisiae (strain YJM789) (Baker's yeast), this protein is Adenylate kinase.